The following is a 322-amino-acid chain: Cysteine protease YopT (322 aa).

Residues 43–72 form a disordered region; sequence SHSNRQKKLSATIKHNQSSRSMLDRKLTSD. Residues Cys139, His258, and Asp274 contribute to the active site.

Belongs to the peptidase C58 family. In terms of assembly, interacts with human ARHA.

It localises to the secreted. Its function is as follows. Cysteine protease, which is translocated into infected cells and plays a central role in pathogenesis by cleaving the C-terminus end of the human small GTPase RhoA/ARHA, a regulator of cytoskeleton. Once cleaved, ARHA loses its lipid modification, and is released from the cell membrane, leading to the subsequent disruption of actin cytoskeleton of the host cell. This is Cysteine protease YopT (yopT) from Yersinia enterocolitica.